The following is a 312-amino-acid chain: Ribonuclease HIII (312 aa).

The region spanning 95 to 311 is the RNase H type-2 domain; the sequence is FNCIGSDEAG…REKAQKILKP (217 aa). A divalent metal cation-binding residues include D101, E102, and D206.

This sequence belongs to the RNase HII family. RnhC subfamily. Mn(2+) is required as a cofactor. The cofactor is Mg(2+).

It localises to the cytoplasm. The catalysed reaction is Endonucleolytic cleavage to 5'-phosphomonoester.. In terms of biological role, endonuclease that specifically degrades the RNA of RNA-DNA hybrids. The polypeptide is Ribonuclease HIII (Staphylococcus aureus (strain USA300)).